Here is a 141-residue protein sequence, read N- to C-terminus: Hemoglobin subunit alpha-1/2 (141 aa).

Positions 1–141 constitute a Globin domain; sequence VLSAABKSBV…VSTVLTSKYR (141 aa). S3 is subject to Phosphoserine. Residues K7 and K11 each carry the N6-succinyllysine modification. K16 is subject to N6-acetyllysine; alternate. N6-succinyllysine; alternate is present on K16. Y24 is subject to Phosphotyrosine. A Phosphoserine modification is found at S35. K40 carries the post-translational modification N6-succinyllysine. At S49 the chain carries Phosphoserine. H58 contacts O2. H87 serves as a coordination point for heme b. Residue S102 is modified to Phosphoserine. T108 bears the Phosphothreonine mark. S124 bears the Phosphoserine mark. Phosphothreonine is present on residues T134 and T137. Phosphoserine is present on S138.

Belongs to the globin family. In terms of assembly, heterotetramer of two alpha chains and two beta chains. As to expression, red blood cells.

Functionally, involved in oxygen transport from the lung to the various peripheral tissues. This is Hemoglobin subunit alpha-1/2 from Odocoileus virginianus virginianus (Virginia white-tailed deer).